A 211-amino-acid chain; its full sequence is MSTDLRSRVLTEHNVSRETAQALDLYVAQLTRWQTVKNLVGPATLSEVWQRHVADALQLLTIAPEARRWLDLGSGAGIPGLILAIAGRGRSGFHVELVESNARKCAFLSETARLTGAPVTVHNARIEAVIGHRSGIDIVCARALAPLTQLLAWSEPLLTSGTVGLFPKGRDAAAELTEAEDAWTFTRDLIPSRTDSQARIVRVTSLSRVDP.

Residues Gly-73, 126 to 127, and Arg-142 each bind S-adenosyl-L-methionine; that span reads IE.

This sequence belongs to the methyltransferase superfamily. RNA methyltransferase RsmG family.

It is found in the cytoplasm. It catalyses the reaction guanosine(527) in 16S rRNA + S-adenosyl-L-methionine = N(7)-methylguanosine(527) in 16S rRNA + S-adenosyl-L-homocysteine. Specifically methylates the N7 position of guanine in position 527 of 16S rRNA. The protein is Ribosomal RNA small subunit methyltransferase G of Methylorubrum populi (strain ATCC BAA-705 / NCIMB 13946 / BJ001) (Methylobacterium populi).